The chain runs to 83 residues: Small ribosomal subunit protein bS16 (83 aa).

It belongs to the bacterial ribosomal protein bS16 family.

The polypeptide is Small ribosomal subunit protein bS16 (Aromatoleum aromaticum (strain DSM 19018 / LMG 30748 / EbN1) (Azoarcus sp. (strain EbN1))).